The following is a 245-amino-acid chain: uncharacterized protein (245 aa).

This is an uncharacterized protein from Frog virus 3 (isolate Goorha) (FV-3).